Reading from the N-terminus, the 779-residue chain is Transcription factor SPT20 homolog (779 aa).

Serine 296 is modified (phosphoserine). Disordered stretches follow at residues 373–392 and 420–507; these read DEES…DHSN and PVKM…IPRK. The segment covering 424-437 has biased composition (low complexity); that stretch reads SHSSSGSASLSQVS. Over residues 445 to 454 the composition is skewed to polar residues; that stretch reads TETVSVQSSV. Residues 470 to 479 are compositionally biased toward low complexity; that stretch reads SSSGNSSSGN. Threonine 494 is modified (phosphothreonine). A phosphoserine mark is found at serine 519 and serine 524. Disordered regions lie at residues 641–677 and 755–779; these read QLSQ…EQAL and LHHH…TPKF. Positions 755–771 are enriched in basic residues; the sequence is LHHHRHTGSQSKSKMKR.

This sequence belongs to the SPT20 family. As to quaternary structure, interacts with MAPK14. Interacts with ATG9A. Highly expressed in testis, moderately in brain and pituitary gland. Expressed in several fetal tissues, including lung, brain, thymus and kidney. Expression is down-regulated in malignant prostate tissues.

The protein localises to the nucleus. In terms of biological role, required for MAP kinase p38 (MAPK11, MAPK12, MAPK13 and/or MAPK14) activation during gastrulation. Required for down-regulation of E-cadherin during gastrulation by regulating E-cadherin protein level downstream from NCK-interacting kinase (NIK) and independently of the regulation of transcription by FGF signaling and Snail. Required for starvation-induced ATG9A trafficking during autophagy. This Homo sapiens (Human) protein is Transcription factor SPT20 homolog (SUPT20H).